Here is a 91-residue protein sequence, read N- to C-terminus: Cell division protein FtsB (91 aa).

Residues 1 to 3 are Cytoplasmic-facing; that stretch reads MKF. The chain crosses the membrane as a helical span at residues 4 to 21; it reads IVGLLLVLLLALQYQLWI. Residues 22 to 91 lie on the Periplasmic side of the membrane; that stretch reads SKDGLGELRQ…ETFFQVVEEP (70 aa). The stretch at 26 to 74 forms a coiled coil; it reads LGELRQLSRSIKQQRHENATLIERNQVLKAEVQDLKSGLDALEERARSG.

Belongs to the FtsB family. In terms of assembly, part of a complex composed of FtsB, FtsL and FtsQ.

It is found in the cell inner membrane. Essential cell division protein. May link together the upstream cell division proteins, which are predominantly cytoplasmic, with the downstream cell division proteins, which are predominantly periplasmic. The polypeptide is Cell division protein FtsB (Nitrosococcus oceani (strain ATCC 19707 / BCRC 17464 / JCM 30415 / NCIMB 11848 / C-107)).